The sequence spans 1199 residues: Chromosome partition protein Smc (1199 aa).

32–39 serves as a coordination point for ATP; that stretch reads PNGSGKSN. A coiled-coil region spans residues 192–528; it reads GVAEFDEKSE…NARIKTLKDM (337 aa). The region spanning 546 to 658 is the SMC hinge domain; the sequence is PGVVDIAGNL…VDNLENAKKL (113 aa). Positions 691–1051 form a coiled coil; sequence IKVDIDMKKL…YLQLISEVQK (361 aa).

The protein belongs to the SMC family. Homodimer.

The protein resides in the cytoplasm. Its function is as follows. Required for chromosome condensation and partitioning. The chain is Chromosome partition protein Smc from Methanococcus voltae.